We begin with the raw amino-acid sequence, 190 residues long: Lysozyme g (190 aa).

The segment covering 1 to 10 (MPYGKIEDIK) has biased composition (basic and acidic residues). A disordered region spans residues 1–31 (MPYGKIEDIKTSGASDVTAAQDGLKEGGWKS). Active-site residues include glutamate 71 and aspartate 84.

Belongs to the glycosyl hydrolase 23 family.

The enzyme catalyses Hydrolysis of (1-&gt;4)-beta-linkages between N-acetylmuramic acid and N-acetyl-D-glucosamine residues in a peptidoglycan and between N-acetyl-D-glucosamine residues in chitodextrins.. In Takifugu rubripes (Japanese pufferfish), this protein is Lysozyme g.